The chain runs to 381 residues: MEEDRAILTFHRIPSLNSSLITTSSPAKSGAEQFRRRVLRNPARGDFGLGRFACISLVEKCEQREFAPTTAQLLNNPLAILALVPKDAAIFAAGALAGAAAKTVTAPLDRIKLLMQTHGIRLGQQSAKKAIGFIEAITLIAKEEGVKGYWKGNLPQVIRVLPYSAVQLLAYESYKNLFKGKDDQLSVIGRLAAGACAGMTSTLLTYPLDVLRLRLAVEPGYRTMSQVALSMLRDEGIASFYYGLGPSLVGIAPYIAVNFCIFDLVKKSLPEEYRKKAQSSLLTAVLSAGIATLTCYPLDTVRRQMQMRGTPYKSIPEAFAGIIDRDGLIGLYRGFLPNALKTLPNSSIRLTTFDMVKRLIATSEKQLQKISDDNRNRDQAQ.

The transit peptide at 1 to 26 (MEEDRAILTFHRIPSLNSSLITTSSP) directs the protein to the chloroplast. Transmembrane regions (helical) follow at residues 78–98 (LAIL…ALAG), 154–179 (LPQV…NLFK), 191–211 (LAAG…LDVL), 237–257 (IASF…YIAV), and 281–301 (LLTA…LDTV). Solcar repeat units lie at residues 85–177 (PKDA…YKNL), 185–268 (LSVI…VKKS), and 279–359 (SSLL…VKRL). R159 contributes to the ADP binding site. ADP is bound at residue R302. Residues 334-360 (GFLPNALKTLPNSSIRLTTFDMVKRLI) form a helical membrane-spanning segment.

Belongs to the mitochondrial carrier (TC 2.A.29) family.

The protein resides in the plastid. The protein localises to the chloroplast membrane. Its function is as follows. Transports adenine nucleotides. This chain is Probable envelope ADP,ATP carrier protein, chloroplastic (EAAC), found in Arabidopsis thaliana (Mouse-ear cress).